The primary structure comprises 245 residues: 1-(5-phosphoribosyl)-5-[(5-phosphoribosylamino)methylideneamino] imidazole-4-carboxamide isomerase (245 aa).

The active-site Proton acceptor is the Asp-8. Asp-129 serves as the catalytic Proton donor.

The protein belongs to the HisA/HisF family.

Its subcellular location is the cytoplasm. It carries out the reaction 1-(5-phospho-beta-D-ribosyl)-5-[(5-phospho-beta-D-ribosylamino)methylideneamino]imidazole-4-carboxamide = 5-[(5-phospho-1-deoxy-D-ribulos-1-ylimino)methylamino]-1-(5-phospho-beta-D-ribosyl)imidazole-4-carboxamide. It functions in the pathway amino-acid biosynthesis; L-histidine biosynthesis; L-histidine from 5-phospho-alpha-D-ribose 1-diphosphate: step 4/9. In Geotalea daltonii (strain DSM 22248 / JCM 15807 / FRC-32) (Geobacter daltonii), this protein is 1-(5-phosphoribosyl)-5-[(5-phosphoribosylamino)methylideneamino] imidazole-4-carboxamide isomerase.